We begin with the raw amino-acid sequence, 351 residues long: MGKLQDGIAIKRINDAITTFKNYKLGELEQGGSMAINTLSNVRAHVGLAWPAILRNCLIHTSSHLGFMKFMIDIATTWKVGAFTLLGSVGDEDPFTDVDLIYTKTCLHLGLKDNDFLQFPEEFAYEANSFLEAQSMNARVDMLTGVHNIEDKYVFRMQSISKFLKAYYTASEDVAYLTGFIKPDDSKDSILSAELLKAQVTSEVLRVRNLITTKIQKYINLYEDSQLPHFRQAALSYTQDWDVDGGVPAALPQPDTTDDENPVANPGPSAPTVSKGADQPEDEEMIRKKVETSKDGPPKAVPSGNVSARGFPAFLEDDMSEMDAPDGFHDYLTREHENNFDLTQLGLAPSV.

The tract at residues 245 to 310 (GGVPAALPQP…VPSGNVSARG (66 aa)) is disordered. The segment covering 285–297 (MIRKKVETSKDGP) has biased composition (basic and acidic residues).

The protein belongs to the phytoreovirus minor outer capsid protein P9 family.

Its subcellular location is the virion. It localises to the host cytoplasm. Its function is as follows. Minor outer capsid protein. The protein is Minor outer capsid protein P9 of Rice dwarf virus (isolate Akita) (RDV).